Consider the following 310-residue polypeptide: Ribosomal protein uL3 glutamine methyltransferase (310 aa).

Belongs to the protein N5-glutamine methyltransferase family. PrmB subfamily.

It carries out the reaction L-glutaminyl-[ribosomal protein uL3] + S-adenosyl-L-methionine = N(5)-methyl-L-glutaminyl-[ribosomal protein uL3] + S-adenosyl-L-homocysteine + H(+). Methylates large ribosomal subunit protein uL3 on a specific glutamine residue. In Vibrio anguillarum (strain ATCC 68554 / 775) (Listonella anguillarum), this protein is Ribosomal protein uL3 glutamine methyltransferase.